A 511-amino-acid chain; its full sequence is Anthranilate synthase component 1 (511 aa).

The tract at residues Met1–Val36 is disordered. Polar residues predominate over residues Thr11 to Pro23. L-tryptophan-binding positions include Ser84 and Pro292–Met294. Gly328–Thr329 is a chorismate binding site. Glu355 contributes to the Mg(2+) binding site. Residues Tyr443, Arg463, Gly477–Gly479, and Gly479 contribute to the chorismate site. Position 492 (Glu492) interacts with Mg(2+).

The protein belongs to the anthranilate synthase component I family. As to quaternary structure, heterotetramer consisting of two non-identical subunits: a beta subunit (TrpG) and a large alpha subunit (TrpE). Mg(2+) is required as a cofactor.

The catalysed reaction is chorismate + L-glutamine = anthranilate + pyruvate + L-glutamate + H(+). It participates in amino-acid biosynthesis; L-tryptophan biosynthesis; L-tryptophan from chorismate: step 1/5. With respect to regulation, feedback inhibited by tryptophan. Part of a heterotetrameric complex that catalyzes the two-step biosynthesis of anthranilate, an intermediate in the biosynthesis of L-tryptophan. In the first step, the glutamine-binding beta subunit (TrpG) of anthranilate synthase (AS) provides the glutamine amidotransferase activity which generates ammonia as a substrate that, along with chorismate, is used in the second step, catalyzed by the large alpha subunit of AS (TrpE) to produce anthranilate. In the absence of TrpG, TrpE can synthesize anthranilate directly from chorismate and high concentrations of ammonia. The protein is Anthranilate synthase component 1 (trpE) of Streptomyces coelicolor (strain ATCC BAA-471 / A3(2) / M145).